A 291-amino-acid chain; its full sequence is Dihydroorotate dehydrogenase B (NAD(+)), catalytic subunit (291 aa).

FMN contacts are provided by residues Ser-17 and Lys-42–Thr-43. Substrate is bound by residues Lys-42, Asn-67 to Leu-71, and Asn-118. Asn-118 provides a ligand contact to FMN. Ser-121 (nucleophile) is an active-site residue. Positions 153 and 178 each coordinate FMN. Residue Asn-179 to Thr-180 coordinates substrate. FMN contacts are provided by residues Gly-204, Gly-230 to Gly-231, and Gly-252 to Thr-253.

This sequence belongs to the dihydroorotate dehydrogenase family. Type 1 subfamily. As to quaternary structure, heterotetramer of 2 PyrK and 2 PyrD type B subunits. FMN serves as cofactor.

The protein resides in the cytoplasm. The enzyme catalyses (S)-dihydroorotate + NAD(+) = orotate + NADH + H(+). It functions in the pathway pyrimidine metabolism; UMP biosynthesis via de novo pathway; orotate from (S)-dihydroorotate (NAD(+) route): step 1/1. Functionally, catalyzes the conversion of dihydroorotate to orotate with NAD(+) as electron acceptor. The protein is Dihydroorotate dehydrogenase B (NAD(+)), catalytic subunit (pyrD) of Sulfolobus acidocaldarius (strain ATCC 33909 / DSM 639 / JCM 8929 / NBRC 15157 / NCIMB 11770).